We begin with the raw amino-acid sequence, 41 residues long: Mu-conotoxin pn4c (41 aa).

Residues 1–24 constitute a propeptide that is removed on maturation; that stretch reads DQPAERMQDDISSEHHPFFDPVKR.

The protein belongs to the conotoxin M superfamily. In terms of processing, contains 3 disulfide bonds. They are not added, since framework IV presents two different connectivities (I-V, II-III, IV-VI and I-III, II-V, IV-VI). As to expression, expressed by the venom duct.

The protein resides in the secreted. Its function is as follows. Mu-conotoxins block voltage-gated sodium channels (Nav). Blocks reversibly sodium channels in molluskan neurons, but has no effect on sodium currents in bovine chromaffin cells or in rat brain synaptosomes. Induces paralysis in mollusks (C.retripictus). The protein is Mu-conotoxin pn4c of Conus pennaceus (Feathered cone).